A 242-amino-acid chain; its full sequence is MKKIIIGNWKMNKTVSETRDFIQKFDIFYQENVGKIKEDLDFAIAPSFISLSLISKSLTKKLEIAAQNLSQFDSGAFTGEISGKMLQDLGTKYVIIGHSERREIFKEKDEELKNKILQAQKYDLIPVFCVGESLLEFEAGLTKKVIISQINAIKSVLNFQKAIIAYEPIWAIGTGKTATAAIAEKVCGLIKENFGKNTMVIYGGSVNSKNINELVSQKSIDGALVGGASLDPEEFGKILVNS.

8 to 10 serves as a coordination point for substrate; sequence NWK. His-98 acts as the Electrophile in catalysis. Glu-167 functions as the Proton acceptor in the catalytic mechanism. Residues Gly-173, Ser-205, and 226-227 each bind substrate; that span reads GG.

It belongs to the triosephosphate isomerase family. In terms of assembly, homodimer.

The protein resides in the cytoplasm. The catalysed reaction is D-glyceraldehyde 3-phosphate = dihydroxyacetone phosphate. The protein operates within carbohydrate biosynthesis; gluconeogenesis. It participates in carbohydrate degradation; glycolysis; D-glyceraldehyde 3-phosphate from glycerone phosphate: step 1/1. Its function is as follows. Involved in the gluconeogenesis. Catalyzes stereospecifically the conversion of dihydroxyacetone phosphate (DHAP) to D-glyceraldehyde-3-phosphate (G3P). In Mesomycoplasma hyopneumoniae (strain 232) (Mycoplasma hyopneumoniae), this protein is Triosephosphate isomerase.